We begin with the raw amino-acid sequence, 223 residues long: 7-cyano-7-deazaguanine synthase (223 aa).

11-21 contacts ATP; the sequence is ISGGMDSALAA. Residues Cys189, Cys197, Cys200, and Cys203 each coordinate Zn(2+).

It belongs to the QueC family. Requires Zn(2+) as cofactor.

The catalysed reaction is 7-carboxy-7-deazaguanine + NH4(+) + ATP = 7-cyano-7-deazaguanine + ADP + phosphate + H2O + H(+). It participates in purine metabolism; 7-cyano-7-deazaguanine biosynthesis. In terms of biological role, catalyzes the ATP-dependent conversion of 7-carboxy-7-deazaguanine (CDG) to 7-cyano-7-deazaguanine (preQ(0)). The sequence is that of 7-cyano-7-deazaguanine synthase from Campylobacter fetus subsp. fetus (strain 82-40).